Here is a 448-residue protein sequence, read N- to C-terminus: Putative RNA-ligase (448 aa).

Belongs to the asfivirus M448R family.

The protein localises to the virion. This is Putative RNA-ligase from Ornithodoros (relapsing fever ticks).